The sequence spans 418 residues: UDP-N-acetylglucosamine 1-carboxyvinyltransferase (418 aa).

22–23 (KN) provides a ligand contact to phosphoenolpyruvate. Residue arginine 91 participates in UDP-N-acetyl-alpha-D-glucosamine binding. Cysteine 115 serves as the catalytic Proton donor. Cysteine 115 is modified (2-(S-cysteinyl)pyruvic acid O-phosphothioketal). Aspartate 303 and isoleucine 325 together coordinate UDP-N-acetyl-alpha-D-glucosamine.

It belongs to the EPSP synthase family. MurA subfamily.

It localises to the cytoplasm. The enzyme catalyses phosphoenolpyruvate + UDP-N-acetyl-alpha-D-glucosamine = UDP-N-acetyl-3-O-(1-carboxyvinyl)-alpha-D-glucosamine + phosphate. The protein operates within cell wall biogenesis; peptidoglycan biosynthesis. In terms of biological role, cell wall formation. Adds enolpyruvyl to UDP-N-acetylglucosamine. This chain is UDP-N-acetylglucosamine 1-carboxyvinyltransferase, found in Syntrophobacter fumaroxidans (strain DSM 10017 / MPOB).